Here is a 123-residue protein sequence, read N- to C-terminus: Large ribosomal subunit protein uL14c (123 aa).

It belongs to the universal ribosomal protein uL14 family. As to quaternary structure, part of the 50S ribosomal subunit.

It localises to the plastid. The protein localises to the chloroplast. Its function is as follows. Binds to 23S rRNA. In Brachypodium distachyon (Purple false brome), this protein is Large ribosomal subunit protein uL14c.